An 86-amino-acid chain; its full sequence is Exodeoxyribonuclease 7 small subunit (86 aa).

It belongs to the XseB family. As to quaternary structure, heterooligomer composed of large and small subunits.

It localises to the cytoplasm. It carries out the reaction Exonucleolytic cleavage in either 5'- to 3'- or 3'- to 5'-direction to yield nucleoside 5'-phosphates.. Its function is as follows. Bidirectionally degrades single-stranded DNA into large acid-insoluble oligonucleotides, which are then degraded further into small acid-soluble oligonucleotides. The sequence is that of Exodeoxyribonuclease 7 small subunit from Xanthomonas axonopodis pv. citri (strain 306).